The sequence spans 166 residues: Interferon gamma (166 aa).

The signal sequence occupies residues Met1–Cys23. Pyrrolidone carboxylic acid is present on Gln24. Residues Asn39 and Asn106 are each glycosylated (N-linked (GlcNAc...) asparagine).

Belongs to the type II (or gamma) interferon family. In terms of assembly, homodimer. Interacts with IFNGR1 (via extracellular domain); this interaction promotes IFNGR1 dimerization. As to expression, released primarily from activated T lymphocytes.

It localises to the secreted. Its function is as follows. Type II interferon produced by immune cells such as T-cells and NK cells that plays crucial roles in antimicrobial, antiviral, and antitumor responses by activating effector immune cells and enhancing antigen presentation. Primarily signals through the JAK-STAT pathway after interaction with its receptor IFNGR1 to affect gene regulation. Upon IFNG binding, IFNGR1 intracellular domain opens out to allow association of downstream signaling components JAK2, JAK1 and STAT1, leading to STAT1 activation, nuclear translocation and transcription of IFNG-regulated genes. Many of the induced genes are transcription factors such as IRF1 that are able to further drive regulation of a next wave of transcription. Plays a role in class I antigen presentation pathway by inducing a replacement of catalytic proteasome subunits with immunoproteasome subunits. In turn, increases the quantity, quality, and repertoire of peptides for class I MHC loading. Increases the efficiency of peptide generation also by inducing the expression of activator PA28 that associates with the proteasome and alters its proteolytic cleavage preference. Up-regulates as well MHC II complexes on the cell surface by promoting expression of several key molecules such as cathepsins B/CTSB, H/CTSH, and L/CTSL. Participates in the regulation of hematopoietic stem cells during development and under homeostatic conditions by affecting their development, quiescence, and differentiation. The polypeptide is Interferon gamma (IFNG) (Canis lupus familiaris (Dog)).